The sequence spans 376 residues: Endo-1,4-beta-xylanase A (376 aa).

Residues 1–18 (MHLASSLFLLATLPFGFA) form the signal peptide. The 301-residue stretch at 55-355 (QRERAGLEDK…HPAYYGVVEA (301 aa)) folds into the GH10 domain. Residue N100 is glycosylated (N-linked (GlcNAc...) asparagine). E170 acts as the Proton donor in catalysis. Residue E277 is the Nucleophile of the active site. N358 is a glycosylation site (N-linked (GlcNAc...) asparagine).

The protein belongs to the glycosyl hydrolase 10 (cellulase F) family.

The protein localises to the secreted. The catalysed reaction is Endohydrolysis of (1-&gt;4)-beta-D-xylosidic linkages in xylans.. It participates in glycan degradation; xylan degradation. Partial inhibition of activity is detected in the presence of Ag(+), Cu2(+) and SDS. Like most fungal xylanases, activity is completely inhibited by Hg(2+) since Hg(2+) could interact with tryptophan residues and oxidize the indole ring. Beta-mercaptoethanol enhances the enzymatic activity by counteracting the oxidation effects of the S-S linkage between cysteine residues. In terms of biological role, endo-1,4-beta-xylanase involved in the hydrolysis of xylan, a major structural heterogeneous polysaccharide found in plant biomass representing the second most abundant polysaccharide in the biosphere, after cellulose. Is most active on birchwood xylan (defined as 100%), moderate on beechwood xylan (96.8%) and soluble wheat arabinoxylan (84.5%), and weak on insoluble wheat arabinoxylan (19.7%). Hydrolyzes substrates into a mixture of xylobiose and xylotriose, but no xylose. No activity was detected in the presence of barley beta-glucan, carboxymethyl cellulose-sodium (CMC-Na), and Avicel. Acts as an alkali-tolerant xylanase, exhibiting 68.8% of the activity at pH 9.0, and even 31.8% at pH 10.0. The protein is Endo-1,4-beta-xylanase A of Humicola insolens (Soft-rot fungus).